Here is a 602-residue protein sequence, read N- to C-terminus: UvrABC system protein C (602 aa).

Positions 17 to 94 (TTSGCYKMYS…IKEYKPDYNI (78 aa)) constitute a GIY-YIG domain. Residues 199 to 234 (SKLLDETEIKMKEAIKKEDFEAAIKLKETKRSLIEI) enclose the UVR domain.

Belongs to the UvrC family. In terms of assembly, interacts with UvrB in an incision complex.

Its subcellular location is the cytoplasm. Its function is as follows. The UvrABC repair system catalyzes the recognition and processing of DNA lesions. UvrC both incises the 5' and 3' sides of the lesion. The N-terminal half is responsible for the 3' incision and the C-terminal half is responsible for the 5' incision. The protein is UvrABC system protein C of Borrelia hermsii (strain HS1 / DAH).